A 381-amino-acid polypeptide reads, in one-letter code: Curved DNA-binding protein (381 aa).

Serine 8 is subject to Phosphoserine. Phosphothreonine is present on threonine 362. Residues 368-375 carry the Nuclear localization signal motif; the sequence is KNKKKSKK.

The protein belongs to the peptidase M24 family.

It is found in the nucleus. Functionally, a non-essential protein that preferentially binds curved DNA. Binds non-curved DNA with a much lower affinity. The sequence is that of Curved DNA-binding protein (cdb4) from Schizosaccharomyces pombe (strain 972 / ATCC 24843) (Fission yeast).